We begin with the raw amino-acid sequence, 281 residues long: Hydroxyethylthiazole kinase (281 aa).

ATP is bound by residues arginine 124 and serine 169.

Belongs to the Thz kinase family. It depends on Mg(2+) as a cofactor.

It catalyses the reaction 5-(2-hydroxyethyl)-4-methylthiazole + ATP = 4-methyl-5-(2-phosphooxyethyl)-thiazole + ADP + H(+). Its pathway is cofactor biosynthesis; thiamine diphosphate biosynthesis; 4-methyl-5-(2-phosphoethyl)-thiazole from 5-(2-hydroxyethyl)-4-methylthiazole: step 1/1. In terms of biological role, catalyzes the phosphorylation of the hydroxyl group of 4-methyl-5-beta-hydroxyethylthiazole (THZ). The chain is Hydroxyethylthiazole kinase from Rhodococcus erythropolis (strain PR4 / NBRC 100887).